The sequence spans 228 residues: MREGKRGPPCILSFRGTLERVEAQWELEAQGPGQCPAPLGDPASTTDGAQEARVPLDGAFWIPRPPAGSPKGCFACVSKPPALQAPAAPAPEPSASPPMAPTLFPMESKSSKTDSVRAAGAPPACKHLAEKKTMTNPTTVIEVYPDTTEVNDYYLWSIFNFVYLNFCCLGFIALAYSLKVRDKKLLNDLNGAVEDAKTARLFNITSSALAASCIILVFIFLRYPLTDY.

At 1–154 the chain is on the extracellular side; the sequence is MREGKRGPPC…PDTTEVNDYY (154 aa). The tract at residues 29 to 49 is disordered; the sequence is AQGPGQCPAPLGDPASTTDGA. The chain crosses the membrane as a helical span at residues 155-175; it reads LWSIFNFVYLNFCCLGFIALA. S-palmitoyl cysteine attachment occurs at residues Cys167 and Cys168. Residues 176–200 lie on the Cytoplasmic side of the membrane; that stretch reads YSLKVRDKKLLNDLNGAVEDAKTAR. The helical transmembrane segment at 201–221 threads the bilayer; it reads LFNITSSALAASCIILVFIFL. Topologically, residues 222–228 are extracellular; the sequence is RYPLTDY.

The protein belongs to the CD225/Dispanin family.

The protein localises to the cell membrane. This Homo sapiens (Human) protein is Interferon-induced transmembrane protein 10 (IFITM10).